A 224-amino-acid polypeptide reads, in one-letter code: Putative O-methyltransferase MUL_4520 (224 aa).

Residues 1–11 show a composition bias toward polar residues; sequence MHGTDSSSDTP. Residues 1–20 are disordered; it reads MHGTDSSSDTPGQPAPSRAE. Residues valine 51, glutamate 73, 75 to 76, serine 81, aspartate 99, and isoleucine 100 contribute to the S-adenosyl-L-methionine site; that span reads GT. Aspartate 147 lines the substrate pocket. Aspartate 149 serves as a coordination point for S-adenosyl-L-methionine.

Belongs to the class I-like SAM-binding methyltransferase superfamily. Cation-dependent O-methyltransferase family.

This Mycobacterium ulcerans (strain Agy99) protein is Putative O-methyltransferase MUL_4520.